A 145-amino-acid chain; its full sequence is Nickel-responsive regulator (145 aa).

His77, His88, His90, and Cys96 together coordinate Ni(2+).

This sequence belongs to the transcriptional regulatory CopG/NikR family. Homotetramer. Ni(2+) serves as cofactor.

Its function is as follows. Transcriptional repressor of the nikABCDE operon. Is active in the presence of excessive concentrations of intracellular nickel. This chain is Nickel-responsive regulator, found in Edwardsiella ictaluri (strain 93-146).